We begin with the raw amino-acid sequence, 354 residues long: Nicotinate-nucleotide--dimethylbenzimidazole phosphoribosyltransferase (354 aa).

The Proton acceptor role is filled by glutamate 319.

It belongs to the CobT family.

It catalyses the reaction 5,6-dimethylbenzimidazole + nicotinate beta-D-ribonucleotide = alpha-ribazole 5'-phosphate + nicotinate + H(+). Its pathway is nucleoside biosynthesis; alpha-ribazole biosynthesis; alpha-ribazole from 5,6-dimethylbenzimidazole: step 1/2. Catalyzes the synthesis of alpha-ribazole-5'-phosphate from nicotinate mononucleotide (NAMN) and 5,6-dimethylbenzimidazole (DMB). The protein is Nicotinate-nucleotide--dimethylbenzimidazole phosphoribosyltransferase of Chlorobium chlorochromatii (strain CaD3).